The primary structure comprises 434 residues: Nicotinate phosphoribosyltransferase (434 aa).

Position 242 is a phosphohistidine; by autocatalysis (histidine 242).

This sequence belongs to the NAPRTase family. Transiently phosphorylated on a His residue during the reaction cycle. Phosphorylation strongly increases the affinity for substrates and increases the rate of nicotinate D-ribonucleotide production. Dephosphorylation regenerates the low-affinity form of the enzyme, leading to product release.

It catalyses the reaction nicotinate + 5-phospho-alpha-D-ribose 1-diphosphate + ATP + H2O = nicotinate beta-D-ribonucleotide + ADP + phosphate + diphosphate. Its pathway is cofactor biosynthesis; NAD(+) biosynthesis; nicotinate D-ribonucleotide from nicotinate: step 1/1. Its function is as follows. Catalyzes the synthesis of beta-nicotinate D-ribonucleotide from nicotinate and 5-phospho-D-ribose 1-phosphate at the expense of ATP. The sequence is that of Nicotinate phosphoribosyltransferase from Bradyrhizobium sp. (strain BTAi1 / ATCC BAA-1182).